A 91-amino-acid chain; its full sequence is Transcription factor ILI3 (91 aa).

Positions 3–58 (SRRGGGGGGGRITDEEINELISKLQALLPESSRSRGASRSSASKLLKETCSYIKSL) constitute a bHLH domain.

Belongs to the bHLH protein family.

Atypical and probable non DNA-binding bHLH transcription that integrates multiple signaling pathways to regulate cell elongation and plant development. The chain is Transcription factor ILI3 (ILI3) from Oryza sativa subsp. indica (Rice).